Consider the following 282-residue polypeptide: 4-diphosphocytidyl-2-C-methyl-D-erythritol kinase (282 aa).

The active site involves K9. An ATP-binding site is contributed by 98-108 (PMGGGLGGGSS). Residue D140 is part of the active site.

Belongs to the GHMP kinase family. IspE subfamily. As to quaternary structure, homodimer.

The catalysed reaction is 4-CDP-2-C-methyl-D-erythritol + ATP = 4-CDP-2-C-methyl-D-erythritol 2-phosphate + ADP + H(+). It participates in isoprenoid biosynthesis; isopentenyl diphosphate biosynthesis via DXP pathway; isopentenyl diphosphate from 1-deoxy-D-xylulose 5-phosphate: step 3/6. Functionally, catalyzes the phosphorylation of the position 2 hydroxy group of 4-diphosphocytidyl-2C-methyl-D-erythritol. The protein is 4-diphosphocytidyl-2-C-methyl-D-erythritol kinase of Salmonella agona (strain SL483).